The chain runs to 306 residues: Nod factor export ATP-binding protein I (306 aa).

One can recognise an ABC transporter domain in the interval 8–238 (IDLVGVRKSF…HIGCNVIEIY (231 aa)). Residue 40 to 47 (GPNGAGKS) participates in ATP binding.

This sequence belongs to the ABC transporter superfamily. Lipooligosaccharide exporter (TC 3.A.1.102) family. As to quaternary structure, the complex is composed of two ATP-binding proteins (NodI) and two transmembrane proteins (NodJ).

The protein localises to the cell inner membrane. Part of the ABC transporter complex NodIJ involved in the export of the nodulation factors (Nod factors), the bacterial signal molecules that induce symbiosis and subsequent nodulation induction. Nod factors are LCO (lipo-chitin oligosaccharide), a modified beta-1,4-linked N-acetylglucosamine oligosaccharide. This subunit is responsible for energy coupling to the transport system. The chain is Nod factor export ATP-binding protein I from Bradyrhizobium diazoefficiens (strain JCM 10833 / BCRC 13528 / IAM 13628 / NBRC 14792 / USDA 110).